The chain runs to 425 residues: Serine--tRNA ligase (425 aa).

L-serine is bound at residue 229–231 (TSE). ATP-binding positions include 259-261 (RKE) and V275. E282 serves as a coordination point for L-serine. An ATP-binding site is contributed by 349–352 (EITS). T384 provides a ligand contact to L-serine.

The protein belongs to the class-II aminoacyl-tRNA synthetase family. Type-1 seryl-tRNA synthetase subfamily. Homodimer. The tRNA molecule binds across the dimer.

Its subcellular location is the cytoplasm. It carries out the reaction tRNA(Ser) + L-serine + ATP = L-seryl-tRNA(Ser) + AMP + diphosphate + H(+). It catalyses the reaction tRNA(Sec) + L-serine + ATP = L-seryl-tRNA(Sec) + AMP + diphosphate + H(+). Its pathway is aminoacyl-tRNA biosynthesis; selenocysteinyl-tRNA(Sec) biosynthesis; L-seryl-tRNA(Sec) from L-serine and tRNA(Sec): step 1/1. Catalyzes the attachment of serine to tRNA(Ser). Is also able to aminoacylate tRNA(Sec) with serine, to form the misacylated tRNA L-seryl-tRNA(Sec), which will be further converted into selenocysteinyl-tRNA(Sec). This is Serine--tRNA ligase from Borreliella afzelii (strain PKo) (Borrelia afzelii).